The sequence spans 262 residues: Imidazole glycerol phosphate synthase subunit HisF (262 aa).

Catalysis depends on residues Asp-11 and Asp-130.

The protein belongs to the HisA/HisF family. Heterodimer of HisH and HisF.

The protein localises to the cytoplasm. It catalyses the reaction 5-[(5-phospho-1-deoxy-D-ribulos-1-ylimino)methylamino]-1-(5-phospho-beta-D-ribosyl)imidazole-4-carboxamide + L-glutamine = D-erythro-1-(imidazol-4-yl)glycerol 3-phosphate + 5-amino-1-(5-phospho-beta-D-ribosyl)imidazole-4-carboxamide + L-glutamate + H(+). It participates in amino-acid biosynthesis; L-histidine biosynthesis; L-histidine from 5-phospho-alpha-D-ribose 1-diphosphate: step 5/9. Its function is as follows. IGPS catalyzes the conversion of PRFAR and glutamine to IGP, AICAR and glutamate. The HisF subunit catalyzes the cyclization activity that produces IGP and AICAR from PRFAR using the ammonia provided by the HisH subunit. The chain is Imidazole glycerol phosphate synthase subunit HisF from Rhodopirellula baltica (strain DSM 10527 / NCIMB 13988 / SH1).